The primary structure comprises 188 residues: MELGNQPGQGNRPEIELEWYQYLQNTVGEALSNYGWYILLGCIVIYFLIQKLSANFTRAVASTRTTVTDPDEIVRRQEAVAAARMRMQVELNAQAELYKQKQVQLQEEKRRRNIETWDRMQEGKSSKVGCRLVQDASPRTSTSSSAPKPKPESRPLRDSGYNPLTGGGGGTCAWRPGRRGPSSGGSUG.

A helical transmembrane segment spans residues 29–49; sequence EALSNYGWYILLGCIVIYFLI. Residues 116–125 show a composition bias toward basic and acidic residues; the sequence is TWDRMQEGKS. The segment at 116–188 is disordered; sequence TWDRMQEGKS…RGPSSGGSUG (73 aa). Over residues 136 to 147 the composition is skewed to low complexity; sequence ASPRTSTSSSAP. Selenocysteine 187 is a non-standard amino acid (selenocysteine).

Belongs to the selenoprotein S family.

It is found in the endoplasmic reticulum membrane. It localises to the cytoplasm. Involved in the degradation process of misfolded endoplasmic reticulum (ER) luminal proteins. Participates in the transfer of misfolded proteins from the ER to the cytosol, where they are destroyed by the proteasome in a ubiquitin-dependent manner. The sequence is that of Selenoprotein S B (vimp-b) from Xenopus laevis (African clawed frog).